The sequence spans 366 residues: MEHFDVAIIGLGPAGSALARKLAGKMQVIALDKKHQHGTEGFSKPCGGLLAPDAQRSFIRDGLTLPVDVIANPQIFSVKTVDVAASLTRNYQRSYININRHAFDLWMKSLIPASVEVYHDSLCRKIWREDDKWHVIFRADGWEQHITARYLVGADGANSMVRRHLYPDHQIRKYVAIQQWFAEKHPVPFYSCIFDNAITDCYSWSISKDGYFIFGGAYPMKDGQTRFTTLKEKMSAFQFQFGKAVKSEKCTVLFPSRWQDFVCGKDNAFLIGEAAGFISASSLEGISYALDSAEILRSVLLKLPEKLNTAYWRATRKLRLKLFGKIVKSRCLTAPALRKWIMRSGVAHIPQLKDYPTRFTSPTSRM.

It belongs to the CbrA family.

This chain is Protein CbrA (cbrA), found in Escherichia coli O1:K1 / APEC.